The primary structure comprises 123 residues: Large ribosomal subunit protein bL12 (123 aa).

It belongs to the bacterial ribosomal protein bL12 family. Homodimer. Part of the ribosomal stalk of the 50S ribosomal subunit. Forms a multimeric L10(L12)X complex, where L10 forms an elongated spine to which 2 to 4 L12 dimers bind in a sequential fashion. Binds GTP-bound translation factors.

Forms part of the ribosomal stalk which helps the ribosome interact with GTP-bound translation factors. Is thus essential for accurate translation. The polypeptide is Large ribosomal subunit protein bL12 (Clostridium acetobutylicum (strain ATCC 824 / DSM 792 / JCM 1419 / IAM 19013 / LMG 5710 / NBRC 13948 / NRRL B-527 / VKM B-1787 / 2291 / W)).